Consider the following 351-residue polypeptide: Deoxyguanosinetriphosphate triphosphohydrolase-like protein (351 aa).

The 122-residue stretch at 75 to 196 (RLTHTLEVAE…VRVADIIAYL (122 aa)) folds into the HD domain.

It belongs to the dGTPase family. Type 2 subfamily.

This is Deoxyguanosinetriphosphate triphosphohydrolase-like protein from Desulfatibacillum aliphaticivorans.